Reading from the N-terminus, the 275-residue chain is Transmembrane protein 202 (275 aa).

4 helical membrane-spanning segments follow: residues 60 to 80, 116 to 136, 151 to 171, and 193 to 213; these read SGFS…QFLV, ALFL…LSSC, VSML…LFLA, and WCSE…FITF.

It localises to the membrane. This is Transmembrane protein 202 (Tmem202) from Mus musculus (Mouse).